Consider the following 481-residue polypeptide: Cysteine--tRNA ligase (481 aa).

Cys29 is a Zn(2+) binding site. A 'HIGH' region motif is present at residues Pro31–Asn41. Zn(2+) contacts are provided by Cys209, His234, and Glu238. The short motif at Lys267–Ser271 is the 'KMSKS' region element. Residue Lys270 participates in ATP binding.

The protein belongs to the class-I aminoacyl-tRNA synthetase family. As to quaternary structure, monomer. The cofactor is Zn(2+).

Its subcellular location is the cytoplasm. It carries out the reaction tRNA(Cys) + L-cysteine + ATP = L-cysteinyl-tRNA(Cys) + AMP + diphosphate. This chain is Cysteine--tRNA ligase, found in Heliobacterium modesticaldum (strain ATCC 51547 / Ice1).